Here is a 123-residue protein sequence, read N- to C-terminus: Cell division protein SepF (123 aa).

Belongs to the SepF family. Homodimer. Interacts with FtsZ.

It is found in the cytoplasm. Its function is as follows. Cell division protein that is part of the divisome complex and is recruited early to the Z-ring. Probably stimulates Z-ring formation, perhaps through the cross-linking of FtsZ protofilaments. Its function overlaps with FtsA. The polypeptide is Cell division protein SepF (Tropheryma whipplei (strain TW08/27) (Whipple's bacillus)).